The sequence spans 559 residues: Formate--tetrahydrofolate ligase (559 aa).

Threonine 68 to threonine 75 is a binding site for ATP.

Belongs to the formate--tetrahydrofolate ligase family.

The enzyme catalyses (6S)-5,6,7,8-tetrahydrofolate + formate + ATP = (6R)-10-formyltetrahydrofolate + ADP + phosphate. It functions in the pathway one-carbon metabolism; tetrahydrofolate interconversion. The polypeptide is Formate--tetrahydrofolate ligase (Rhizobium etli (strain ATCC 51251 / DSM 11541 / JCM 21823 / NBRC 15573 / CFN 42)).